The sequence spans 631 residues: Chaperone protein DnaK (631 aa).

Thr-198 is modified (phosphothreonine; by autocatalysis). A disordered region spans residues 602–631 (EAAGGAQQAGKDDVVDAEFTEVDDDKKKSA).

This sequence belongs to the heat shock protein 70 family.

In terms of biological role, acts as a chaperone. In Rhodopseudomonas palustris (strain ATCC BAA-98 / CGA009), this protein is Chaperone protein DnaK.